Reading from the N-terminus, the 296-residue chain is Mycothiol acetyltransferase (296 aa).

2 consecutive N-acetyltransferase domains span residues 17–146 (YNHR…AVYD) and 156–296 (LKTA…VYEK). E44 serves as a coordination point for 1D-myo-inositol 2-(L-cysteinylamino)-2-deoxy-alpha-D-glucopyranoside. 81–83 (LAV) serves as a coordination point for acetyl-CoA. 1D-myo-inositol 2-(L-cysteinylamino)-2-deoxy-alpha-D-glucopyranoside contacts are provided by E183, K222, and E230. Acetyl-CoA-binding positions include 234–236 (VGL) and 241–247 (RGKGLGD). Y268 provides a ligand contact to 1D-myo-inositol 2-(L-cysteinylamino)-2-deoxy-alpha-D-glucopyranoside.

This sequence belongs to the acetyltransferase family. MshD subfamily. As to quaternary structure, monomer.

It carries out the reaction 1D-myo-inositol 2-(L-cysteinylamino)-2-deoxy-alpha-D-glucopyranoside + acetyl-CoA = mycothiol + CoA + H(+). Functionally, catalyzes the transfer of acetyl from acetyl-CoA to desacetylmycothiol (Cys-GlcN-Ins) to form mycothiol. In Corynebacterium efficiens (strain DSM 44549 / YS-314 / AJ 12310 / JCM 11189 / NBRC 100395), this protein is Mycothiol acetyltransferase.